A 628-amino-acid polypeptide reads, in one-letter code: Chaperone protein DnaK (628 aa).

Position 197 is a phosphothreonine; by autocatalysis (threonine 197). Residues 597-628 are disordered; the sequence is EQMYKGEQGAQGGAADTSKKKSDDDVIDAEIE.

This sequence belongs to the heat shock protein 70 family.

In terms of biological role, acts as a chaperone. The chain is Chaperone protein DnaK from Sulfurimonas denitrificans (strain ATCC 33889 / DSM 1251) (Thiomicrospira denitrificans (strain ATCC 33889 / DSM 1251)).